The sequence spans 2023 residues: MDITVSELMSNFMDSPLVVWVKTFGPLGFSSEDKLSMFMDLVDGVFLHKIMTHIDPSPMNQRVNKQVNNDVNLRIQNLNTVIRHIKNYYQEHLQQLIVMNLPNVLAIAKDPLSGKSMEEMKRMLLLILGCAVQCDRKEEIIEKIKLLDIETQAAIVTHIQEVTHNQENVLDLQWMEVAEIPAEQLDPLSRTMAFHLRKLIDERDESAELVIELTQERDYLQSQQPSGLLGFPSPERTSLSPITLLSKEDRQHLAVELADTKAKLRRSRQELEEKTEQLIDAKNEIERLDSDIQKLKQENTQLLAEARSVRAYRDEVDSLRERAGKVDRLETELSRFKEKLNDVHFYKTRIEELREDNLTLLETKSMLEEQLTGARGRCDKLHELEKENLQLRSKLHDIEIDRDSDKKRLEELLEENMLLEISQKQSMNESAHLGWELEQLAKNNEVNEARKSFVFELNESASSRLLKLEKENQCLQSTIQELREASINMEEGQLHSLELEKENQSLSKKLERLQSQLDQEKQTTQDMENLGEELIKEKQRMEKTLETIQAEKDRQISELEQEKEHLTQAVSSLRKRAQANSEARVREVETENRILHQTISETGGKLARLEAEKRQVTKELESLRERGERCEELEREVPRLERVREQLQREAAALKIGSERAEALERENATLEQDNRRLKKLADTAQNATLRLAVLEKDHQQLEEENLEQRRALETLRPAAARLAQLQQEHAELEREHEEMCRTMEELRSQAKRSERLEKSCGSLSLENQRLQQTLENSSTKMQGLESELRQNEAEMKDLQRELEGLRQKVTWAETLEKENRGMEQELSQLEKEKKQLEKEARRFRQQLEVKEAALEENCLRLASMEKEGTALSKELGRVKEAAGRLKELERENKDLQKQATMDKKTLATLREELVNEKLRVQQQCNELEKLSHELEKIGLNREKLLQEEHSCEDNKYKILETKIESALKKTLELREEKIQSLESRLEESSSLNQQLRTELTTVKKNLEALKQRHEEEAAHSEISQQTLGQTRSLPDKEKWEMEQREATAELLKLKDRLIDVEKNVRQRHVSIDIHRVIFSIVICFCDSLQNAALQTEKYLLKDQLKQIDSQNAQLNAQTLALQKQAASLQEHNTSLHKETAKLQVENSTLSSQSSSLMAQYGALQAQLQTLESEAESLQKQREEASAARDRVTQDHERLLGVHERQASEYEQLIAQHAALKASQRALEQENRTLENKYMVLLKQKDAMEALEESLQRDRESLGEEIRKNTLILGENRSLREEVDRVSHMHTQLRQEYDSLQLQTKELKTSLNESQLELNRWQARYDQLKEQHQGLDISMTKLDNHCELLTRLKGNLEEENHHLLSQIQMLSQQNQTLLERTMESKELYHEEQKQYIDKLNSLRRQKEKLEEKIMDQYKFYDPTPKKSRQWVGAKAIAKFIKPKKESSRERPDAPRERIRSAPDIPLPEIPTCIDCPESAPPPPPPPLPPRQSRPSLDSMNSQSVEENHVQSPTLSSPALNGRVLNESGGSRSRDGYRSIGGGSESMNGYEELLRWRSREPGGATCSTPLSRNSHNAPGFTSSSSLRPGRRPKGLVSEEDLRHHSPDAGFGSGVHGNTGHRPSSAEFSRNTSSSNSPVSSKGSLDCLQGRSASLSSDDVVGLAHEGSRLSQSSLLPRSSTLPCDSPSASRPSQRPASRRPSSPGSEMVTLEEFLQESNALSPPTVQTGSREDLMTDYFTRSTRPVPLRDGAKTPTNYVTPTVKTTPPELDARTPKPGHSVKPSVRLTDTSTPPSHSQTLPNRGAGLRPSALQQSSPRGSVGGSASLSRTFSLASADLLRSNGPDSYRTEAASPNQNDVVMRRPGAVARERPMSARVTGSSPLPGDPGHISVDPRRLSLAQPRDEFSLVSPPPLHSSSMSLQAEREYVGSGSSRAGAARSGSAQPRGAPHRGEVAMVTPVRAVPALRLNDLEEEPQEQREAESPLLKKADTTNLSYASKEQPTSKPASPDPNNDPQTVWYEYGCV.

A Calponin-homology (CH) domain is found at 11–131 (NFMDSPLVVW…RMLLLILGCA (121 aa)). Coiled-coil stretches lie at residues 250–415 (RQHL…LLEE), 458–1064 (NESA…VEKN), and 1105–1419 (LKQI…QYKF). The disordered stretch occupies residues 1013–1035 (RHEEEAAHSEISQQTLGQTRSLP). Over residues 1022–1033 (EISQQTLGQTRS) the composition is skewed to polar residues. 2 disordered regions span residues 1441-1824 (KPKK…GSAS) and 1837-2023 (LRSN…YGCV). Residues 1442-1460 (PKKESSRERPDAPRERIRS) are compositionally biased toward basic and acidic residues. Over residues 1478-1491 (SAPPPPPPPLPPRQ) the composition is skewed to pro residues. Polar residues-rich tracts occupy residues 1497–1518 (DSMN…SSPA) and 1564–1585 (TCST…SSSL). Low complexity-rich tracts occupy residues 1623–1643 (SAEF…KGSL) and 1667–1704 (RLSQ…SPGS). Positions 1700–1728 (SSPGSEMVTLEEFLQESNALSPPTVQTGS) match the GBA motif. 4 stretches are compositionally biased toward polar residues: residues 1714 to 1727 (QESN…VQTG), 1752 to 1763 (TPTNYVTPTVKT), 1785 to 1799 (LTDT…QTLP), and 1809 to 1824 (ALQQ…GSAS). The span at 1890 to 1904 (VDPRRLSLAQPRDEF) shows a compositional bias: basic and acidic residues. The span at 1927 to 1945 (GSGSSRAGAARSGSAQPRG) shows a compositional bias: low complexity. Positions 1974-1988 (QEQREAESPLLKKAD) are enriched in basic and acidic residues. Polar residues predominate over residues 1989–2014 (TTNLSYASKEQPTSKPASPDPNNDPQ). Residues 2020–2023 (YGCV) carry the PDZ-binding motif.

The protein belongs to the CCDC88 family.

It localises to the cytoplasm. It is found in the cell junction. In terms of biological role, positive regulator of Wnt signaling, acting synergistically with dvl2. Functions upstream of ctnnb1/beta-catenin in the canonical Wnt pathway, and also activates jnk in the Wnt/planar cell polarity (PCP) pathway. Acts as a non-receptor guanine nucleotide exchange factor which binds to and activates guanine nucleotide-binding protein G(i) alpha (Gi-alpha) subunits. This promotes apical cell constriction and subsequent bending of the neural plate during neurulation via arhgef18. This chain is Protein Daple, found in Danio rerio (Zebrafish).